The following is a 1414-amino-acid chain: DNA-directed RNA polymerase subunit beta' (1414 aa).

Zn(2+) is bound by residues cysteine 72, cysteine 74, cysteine 87, and cysteine 90. Positions 463, 465, and 467 each coordinate Mg(2+). Zn(2+) is bound by residues cysteine 811, cysteine 885, cysteine 892, and cysteine 895.

The protein belongs to the RNA polymerase beta' chain family. As to quaternary structure, the RNAP catalytic core consists of 2 alpha, 1 beta, 1 beta' and 1 omega subunit. When a sigma factor is associated with the core the holoenzyme is formed, which can initiate transcription. Mg(2+) is required as a cofactor. The cofactor is Zn(2+).

The enzyme catalyses RNA(n) + a ribonucleoside 5'-triphosphate = RNA(n+1) + diphosphate. In terms of biological role, DNA-dependent RNA polymerase catalyzes the transcription of DNA into RNA using the four ribonucleoside triphosphates as substrates. This Roseobacter denitrificans (strain ATCC 33942 / OCh 114) (Erythrobacter sp. (strain OCh 114)) protein is DNA-directed RNA polymerase subunit beta'.